A 922-amino-acid chain; its full sequence is Alpha-actinin, sarcomeric (922 aa).

An actin-binding region spans residues 1–252 (MMENGGYVGQ…IMTYVSCYYH (252 aa)). Calponin-homology (CH) domains follow at residues 36 to 140 (KQQK…LRFA) and 149 to 255 (MTAK…HAFQ). Spectrin repeat units lie at residues 253–393 (AFQG…MVSD), 394–508 (ITNS…RCQR), 509–629 (ICDQ…SADL), and 630–742 (ISRK…TMET). EF-hand domains are found at residues 776–811 (EQLT…LGYS) and 817–852 (QGDM…ESTD). Ca(2+) contacts are provided by D789, N791, T793, R795, and E800.

The protein belongs to the alpha-actinin family. In terms of assembly, homodimer; antiparallel.

Its function is as follows. F-actin cross-linking protein which is thought to anchor actin to a variety of intracellular structures. This is a bundling protein. This Anopheles gambiae (African malaria mosquito) protein is Alpha-actinin, sarcomeric (Actn).